Consider the following 219-residue polypeptide: Ribose-5-phosphate isomerase A (219 aa).

Residues 28–31 (TGST), 81–84 (DGAD), and 94–97 (KGGG) each bind substrate. Residue E103 is the Proton acceptor of the active site. K121 is a substrate binding site.

This sequence belongs to the ribose 5-phosphate isomerase family. Homodimer.

It carries out the reaction aldehydo-D-ribose 5-phosphate = D-ribulose 5-phosphate. Its pathway is carbohydrate degradation; pentose phosphate pathway; D-ribose 5-phosphate from D-ribulose 5-phosphate (non-oxidative stage): step 1/1. Functionally, catalyzes the reversible conversion of ribose-5-phosphate to ribulose 5-phosphate. The protein is Ribose-5-phosphate isomerase A of Acidithiobacillus ferrooxidans (strain ATCC 23270 / DSM 14882 / CIP 104768 / NCIMB 8455) (Ferrobacillus ferrooxidans (strain ATCC 23270)).